Consider the following 428-residue polypeptide: Enolase 1 (428 aa).

Residues glutamate 38–serine 58 are disordered. Glutamine 163 is a (2R)-2-phosphoglycerate binding site. Catalysis depends on glutamate 205, which acts as the Proton donor. Aspartate 242, glutamate 286, and aspartate 313 together coordinate Mg(2+). 4 residues coordinate (2R)-2-phosphoglycerate: lysine 338, arginine 367, serine 368, and lysine 389. The active-site Proton acceptor is the lysine 338.

Belongs to the enolase family. It depends on Mg(2+) as a cofactor.

The protein resides in the cytoplasm. It is found in the secreted. The protein localises to the cell surface. The catalysed reaction is (2R)-2-phosphoglycerate = phosphoenolpyruvate + H2O. It functions in the pathway carbohydrate degradation; glycolysis; pyruvate from D-glyceraldehyde 3-phosphate: step 4/5. Its function is as follows. Catalyzes the reversible conversion of 2-phosphoglycerate (2-PG) into phosphoenolpyruvate (PEP). It is essential for the degradation of carbohydrates via glycolysis. This Lactobacillus gasseri (strain ATCC 33323 / DSM 20243 / BCRC 14619 / CIP 102991 / JCM 1131 / KCTC 3163 / NCIMB 11718 / NCTC 13722 / AM63) protein is Enolase 1.